Here is a 358-residue protein sequence, read N- to C-terminus: PDZ and LIM domain protein 3 (358 aa).

Residues 1-84 form the PDZ domain; it reads MPQNVLLPGP…QLCLKIDRAE (84 aa). 2 disordered regions span residues 126-155 and 237-274; these read FILP…SVST and DTEH…RAPV. A compositionally biased stretch (low complexity) spans 129–146; the sequence is PGRSSGSSTPSGFDPGSG. Positions 288–347 constitute an LIM zinc-binding domain; the sequence is PICDRCGNGIVGTVVKAKDKLRHPDCFVCSDCNLNLKQKGYFFVEGQLYCEAHARARMRP.

The protein resides in the cytoplasm. It is found in the myofibril. Its subcellular location is the sarcomere. It localises to the z line. Functionally, may play a role in the organization of actin filament arrays within muscle cells. The protein is PDZ and LIM domain protein 3 (pdlim3) of Xenopus laevis (African clawed frog).